A 244-amino-acid polypeptide reads, in one-letter code: Phosphoadenosine 5'-phosphosulfate reductase (244 aa).

Cys-239 (nucleophile; cysteine thiosulfonate intermediate) is an active-site residue.

The protein belongs to the PAPS reductase family. CysH subfamily.

Its subcellular location is the cytoplasm. The enzyme catalyses [thioredoxin]-disulfide + sulfite + adenosine 3',5'-bisphosphate + 2 H(+) = [thioredoxin]-dithiol + 3'-phosphoadenylyl sulfate. It functions in the pathway sulfur metabolism; hydrogen sulfide biosynthesis; sulfite from sulfate: step 3/3. Catalyzes the formation of sulfite from phosphoadenosine 5'-phosphosulfate (PAPS) using thioredoxin as an electron donor. The polypeptide is Phosphoadenosine 5'-phosphosulfate reductase (Yersinia pseudotuberculosis serotype O:1b (strain IP 31758)).